The sequence spans 1002 residues: Vacuolar protein sorting-associated protein 18 homolog (1002 aa).

Residue serine 344 is modified to Phosphoserine. The CHCR repeat unit spans residues leucine 650 to lysine 804. The stretch at phenylalanine 827–glutamate 880 forms a coiled coil. An RING-type; degenerate zinc finger spans residues cysteine 885–cysteine 924.

The protein belongs to the VPS18 family. As to quaternary structure, component of the class C core vacuole/endosome tethering (CORVET) complex composed of at least Vps8, dor/Vps18, car/Vps33A and Vps16A; unlike in other species, Vps11 is not part of the Drosophila complex. Due to the reduced number of components the Drosophila CORVET complex is often referred to as the miniCORVET complex. Interacts with car/Vps33A. Interacts with ema. Component of the homotypic fusion and vacuole protein sorting (HOPS) complex, composed of Vps16A, car/Vps33A, dor/Vps18, Vps39, Vps11 and lt/Vps41. The tethering complex core made up of Vps16A, car/Vps33A and dor/Vps18 and shared by both HOPS and CORVET, preferentially associates with CORVET-specific Vps8 over HOPS-specific lt/Vps41. Interacts with Syx17 (via SNARE domain); the interaction may involve multiple components of the HOPS complex and may promote assembly of the Syx17-Snap29-Vamp7 trans-SNARE complex.

Its subcellular location is the early endosome. It is found in the late endosome membrane. The protein resides in the lysosome membrane. The protein localises to the cytoplasmic vesicle. It localises to the autophagosome. Functionally, core component of the class C core vacuole/endosome tethering (CORVET) and the homotypic fusion and vacuole protein sorting (HOPS) tethering complexes involved in endo-lysosomal vesicle trafficking and lysosome biogenesis. The CORVET complex facilitates docking and fusion of endosomal vesicles during endosome maturation, acts upstream of HOPS, but is not involved in autophagic flux. The CORVET complex may cooperate with the early endosomal tether Rbsn-5 to mediate endosomal fusion. The HOPS complex facilitates docking and fusion of lysosomes with late endosomes and several other types of vesicles. The HOPS complex is also involved in autophagy and crinophagy (the elimination of unused secretory granules through their fusion with lysosomes). The HOPS complex mediates autophagocitic flux, probably by binding autophagosome-associated Syx17/syntaxin 17, promoting assembly of the trans-SNARE complex and instigating autophagosome-lysosome fusion. Independent of Syx17/syntaxin 17, HOPS is involved in biosynthetic transport to lysosomes and lysosome-related organelles such as eye-pigment granules. Required for endocytic degradation of boss/bride of sevenless and N/Notch in developing ommatidia. Required for autophagocytosis-dependent remodeling of myofibrils and transverse-tubules (T-tubules) during metamorphosis. In larval neuromuscular junctions, essential for endosomal sorting that traffics old or dysfunctional synaptic vesicle proteins through a degradative endolysosomal route. Required to maintain normal levels of rush, which functions in endosome formation and trafficking. This is Vacuolar protein sorting-associated protein 18 homolog from Drosophila melanogaster (Fruit fly).